We begin with the raw amino-acid sequence, 624 residues long: ABC transporter G family member 23 (624 aa).

One can recognise an ABC transporter domain in the interval L52 to E296. Position 84-91 (G84–S91) interacts with ATP. The ABC transmembrane type-2 domain occupies T350–Y560. 6 consecutive transmembrane segments (helical) span residues L369–T389, L402–I422, I450–I470, F480–F500, G511–P531, and I595–L615.

Belongs to the ABC transporter superfamily. ABCG family. Eye pigment precursor importer (TC 3.A.1.204) subfamily.

It localises to the membrane. The sequence is that of ABC transporter G family member 23 (ABCG23) from Arabidopsis thaliana (Mouse-ear cress).